The sequence spans 373 residues: MGEVKTAIGLMSGTSMDGIDIAVLRTDGESVVRHGPSGYFPYDPGLRGIWQKALTTAKAIRERRERPGDLGEAERKLTLAHAAAVKSFLHRHRFDVGDIDVIGFHGQTVLHRPDEALTVQIGDGALLAEETGIDVVYDMRANDMVHGGQGAPLIPAYHMALSANLPDGFETPAVFVNIGGISNLTYIGEGGRLAAFDSGPGNMLIDQWIEAHTGKAFDKGGRTAAGGSVVASLVARYMESPFFSANIRRSLDRSDFVPPQKGEVSLADGARTLSHLTGAAILKSASYLPEAAKTYVVCGGGRLNPVIMEELAGLAAKQGARVIAAEEAGFDGGAMEAEAWAYLAVRSLRGLPLTYPGTTGVKEPVTGGVLVRA.

Residue 13–20 (GTSMDGID) participates in ATP binding.

The protein belongs to the anhydro-N-acetylmuramic acid kinase family.

It catalyses the reaction 1,6-anhydro-N-acetyl-beta-muramate + ATP + H2O = N-acetyl-D-muramate 6-phosphate + ADP + H(+). It participates in amino-sugar metabolism; 1,6-anhydro-N-acetylmuramate degradation. It functions in the pathway cell wall biogenesis; peptidoglycan recycling. In terms of biological role, catalyzes the specific phosphorylation of 1,6-anhydro-N-acetylmuramic acid (anhMurNAc) with the simultaneous cleavage of the 1,6-anhydro ring, generating MurNAc-6-P. Is required for the utilization of anhMurNAc either imported from the medium or derived from its own cell wall murein, and thus plays a role in cell wall recycling. The polypeptide is Anhydro-N-acetylmuramic acid kinase (Agrobacterium fabrum (strain C58 / ATCC 33970) (Agrobacterium tumefaciens (strain C58))).